We begin with the raw amino-acid sequence, 493 residues long: Cobyric acid synthase (493 aa).

A GATase cobBQ-type domain is found at 255–441; the sequence is ELEIAVLRLP…LHGLLENGRW (187 aa). Cys336 functions as the Nucleophile in the catalytic mechanism. His433 is an active-site residue.

It belongs to the CobB/CobQ family. CobQ subfamily.

It participates in cofactor biosynthesis; adenosylcobalamin biosynthesis. Catalyzes amidations at positions B, D, E, and G on adenosylcobyrinic A,C-diamide. NH(2) groups are provided by glutamine, and one molecule of ATP is hydrogenolyzed for each amidation. This is Cobyric acid synthase from Synechococcus sp. (strain RCC307).